We begin with the raw amino-acid sequence, 192 residues long: Small ribosomal subunit protein uS4c-2 (192 aa).

The region spanning 91–155 (TRLDHLVYRA…PKPPEYLPPY (65 aa)) is the S4 RNA-binding domain.

It belongs to the universal ribosomal protein uS4 family. As to quaternary structure, part of the 30S ribosomal subunit. Contacts protein S5. The interaction surface between S4 and S5 is involved in control of translational fidelity.

The protein localises to the plastid. Its subcellular location is the chloroplast. Functionally, one of the primary rRNA binding proteins, it binds directly to 16S rRNA where it nucleates assembly of the body of the 30S subunit. With S5 and S12 plays an important role in translational accuracy. The chain is Small ribosomal subunit protein uS4c-2 from Cyanidium caldarium (Red alga).